Here is a 521-residue protein sequence, read N- to C-terminus: Bifunctional dihydrofolate reductase-thymidylate synthase (521 aa).

Residues 22-232 form the DHFR domain; it reads AFSLVVAVDE…TKYYFEKLIP (211 aa). Valine 26 contacts substrate. NADP(+) contacts are provided by residues alanine 28 and 34–40; that span reads GIGDGRS. Aspartate 48 is a substrate binding site. Residues 78–80 and 99–102 each bind NADP(+); these read RKT and LSST. Residues isoleucine 154, tyrosine 160, and threonine 178 each coordinate substrate. Position 155–162 (155–162) interacts with NADP(+); it reads GGGSVYAE. The tract at residues 237–521 is thymidylate synthase; that stretch reads EEQYLSLVDR…YPPISMKMAV (285 aa). A dUMP-binding site is contributed by arginine 257. Cysteine 403 is an active-site residue. Residues histidine 404, 422-426, asparagine 434, and 464-466 contribute to the dUMP site; these read QRSCD and HVY.

It in the N-terminal section; belongs to the dihydrofolate reductase family. In the C-terminal section; belongs to the thymidylate synthase family. As to quaternary structure, homodimer.

The catalysed reaction is (6S)-5,6,7,8-tetrahydrofolate + NADP(+) = 7,8-dihydrofolate + NADPH + H(+). It catalyses the reaction dUMP + (6R)-5,10-methylene-5,6,7,8-tetrahydrofolate = 7,8-dihydrofolate + dTMP. The protein operates within cofactor biosynthesis; tetrahydrofolate biosynthesis; 5,6,7,8-tetrahydrofolate from 7,8-dihydrofolate: step 1/1. Its function is as follows. Bifunctional enzyme. Involved in de novo dTMP biosynthesis. Key enzyme in folate metabolism. Catalyzes an essential reaction for de novo glycine and purine synthesis, DNA precursor synthesis, and for the conversion of dUMP to dTMP. The polypeptide is Bifunctional dihydrofolate reductase-thymidylate synthase (Trypanosoma cruzi).